A 340-amino-acid chain; its full sequence is Glycerol-3-phosphate dehydrogenase [NAD(P)+] (340 aa).

The NADPH site is built by Trp11, Arg33, and Lys110. Sn-glycerol 3-phosphate is bound by residues Lys110, Gly144, and Ser146. Ala148 contacts NADPH. Residues Lys199, Asp252, Ser262, Arg263, and Asn264 each contribute to the sn-glycerol 3-phosphate site. The active-site Proton acceptor is Lys199. Arg263 contacts NADPH. Val287 and Glu289 together coordinate NADPH.

This sequence belongs to the NAD-dependent glycerol-3-phosphate dehydrogenase family.

Its subcellular location is the cytoplasm. The enzyme catalyses sn-glycerol 3-phosphate + NAD(+) = dihydroxyacetone phosphate + NADH + H(+). It catalyses the reaction sn-glycerol 3-phosphate + NADP(+) = dihydroxyacetone phosphate + NADPH + H(+). The protein operates within membrane lipid metabolism; glycerophospholipid metabolism. Catalyzes the reduction of the glycolytic intermediate dihydroxyacetone phosphate (DHAP) to sn-glycerol 3-phosphate (G3P), the key precursor for phospholipid synthesis. In Polynucleobacter necessarius subsp. necessarius (strain STIR1), this protein is Glycerol-3-phosphate dehydrogenase [NAD(P)+].